A 440-amino-acid chain; its full sequence is Endoplasmic reticulum junction formation protein lunapark (440 aa).

The Cytoplasmic segment spans residues Met1–Arg45. A coiled-coil region spans residues Glu16 to Lys40. The helical transmembrane segment at Leu46 to Leu66 threads the bilayer. At Pro67 to Thr77 the chain is on the lumenal side. Residues Leu78–Phe98 traverse the membrane as a helical segment. Residues Ser99–Glu440 lie on the Cytoplasmic side of the membrane. The stretch at Arg100–Thr128 forms a coiled coil. The tract at residues Leu149–Arg169 is disordered. A Phosphothreonine modification is found at Thr159. A phosphoserine mark is found at Ser177, Ser179, Ser188, and Ser192. Thr198 carries the phosphothreonine modification. The disordered stretch occupies residues Gln202–Pro247. 2 positions are modified to phosphoserine: Ser206 and Ser215. Residues Val216 to Leu225 show a composition bias toward polar residues. A Phosphothreonine modification is found at Thr219. Phosphoserine occurs at positions 222 and 231. The C4-type; plays a role in ER morphology zinc finger occupies Cys280 to Cys305. A disordered region spans residues Pro316–Glu440. Residue Ser325 is modified to Phosphoserine. Residues Asp334–Gln343 show a composition bias toward polar residues. Acidic residues-rich tracts occupy residues Gln370–Glu411 and Glu431–Glu440.

This sequence belongs to the lunapark family. In terms of assembly, homodimer; homodimerization requires the C4-type zinc finger motif and decreases during mitosis in a phosphorylation-dependent manner. In terms of processing, phosphorylated. Phosphorylation at Thr-159 and Ser-325 occurs during interphase. Phosphorylation at Ser-177, Ser-179, Ser-188, Ser-192, Thr-198, Ser-206, Ser-215, Thr-219, Ser-222 and Ser-231 occurs during mitosis; these phosphorylations reduce both its homodimerization and the ER three-way tubular junction formation.

It is found in the endoplasmic reticulum membrane. Endoplasmic reticulum (ER)-shaping membrane protein that plays a role in determining ER morphology. Involved in the stabilization of nascent three-way ER tubular junctions within the ER network. May also play a role as a curvature-stabilizing protein within three-way ER tubular junction network. In Xenopus laevis (African clawed frog), this protein is Endoplasmic reticulum junction formation protein lunapark (lnpk).